The following is a 221-amino-acid chain: Retinitis pigmentosa 9 protein (221 aa).

3 stretches are compositionally biased toward basic and acidic residues: residues 1–10 (MSSRPGREDV), 17–29 (RPRE…LQRR), and 60–69 (IKEDETKPED). The disordered stretch occupies residues 1–76 (MSSRPGREDV…PEDCIPDVPG (76 aa)). The interval 1–155 (MSSRPGREDV…RDNKRHEKDV (155 aa)) is PIM1-binding. A CCHC-type zinc finger spans residues 104–122 (QCWRCKRYGHRTGDKECPF). Residue Lys-129 forms a Glycyl lysine isopeptide (Lys-Gly) (interchain with G-Cter in SUMO2) linkage. Positions 147–156 (DNKRHEKDVR) are enriched in basic and acidic residues. The segment at 147–221 (DNKRHEKDVR…SKSNEGSDSE (75 aa)) is disordered. A compositionally biased stretch (basic residues) spans 184–212 (KHKKKKKKEKHKKRKKEKKKKKKRKHKSS). Ser-212 and Ser-214 each carry phosphoserine; by PIM1.

Binds to PIM1. Binds to ZNHIT4. As to expression, appears to be expressed in a wide range of tissues.

It localises to the nucleus. Functionally, is thought to be a target protein for the PIM1 kinase. May play some roles in B-cell proliferation in association with PIM1. This is Retinitis pigmentosa 9 protein (RP9) from Homo sapiens (Human).